We begin with the raw amino-acid sequence, 324 residues long: uncharacterized protein (324 aa).

The protein belongs to the mgp1/MG371 family.

This is an uncharacterized protein from Mycoplasma genitalium (strain ATCC 33530 / DSM 19775 / NCTC 10195 / G37) (Mycoplasmoides genitalium).